Here is a 439-residue protein sequence, read N- to C-terminus: Uracil-regulated protein 1 (439 aa).

A disordered region spans residues 1–24; that stretch reads MLATEQSRPAECNGAHAHEKTEEV. Position 268–272 (268–272) interacts with GTP; it reads RVHDE. The Zn(2+) site is built by cysteine 273, cysteine 284, and cysteine 286. Residue 315 to 317 participates in GTP binding; it reads EGR. The Proton acceptor role is filled by aspartate 353. Arginine 355 acts as the Nucleophile in catalysis. GTP is bound by residues serine 377 and lysine 382.

This sequence belongs to the GTP cyclohydrolase II family.

Its subcellular location is the cytoplasm. It localises to the nucleus. In Schizosaccharomyces pombe (strain 972 / ATCC 24843) (Fission yeast), this protein is Uracil-regulated protein 1 (urg1).